Here is a 428-residue protein sequence, read N- to C-terminus: tRNA(Ile2) 2-agmatinylcytidine synthetase TiaS (428 aa).

This sequence belongs to the TiaS family.

It localises to the cytoplasm. The catalysed reaction is cytidine(34) in tRNA(Ile2) + agmatine + ATP + H2O = 2-agmatinylcytidine(34) in tRNA(Ile2) + AMP + 2 phosphate + 2 H(+). Functionally, ATP-dependent agmatine transferase that catalyzes the formation of 2-agmatinylcytidine (agm2C) at the wobble position (C34) of tRNA(Ile2), converting the codon specificity from AUG to AUA. In Methanosarcina mazei (strain ATCC BAA-159 / DSM 3647 / Goe1 / Go1 / JCM 11833 / OCM 88) (Methanosarcina frisia), this protein is tRNA(Ile2) 2-agmatinylcytidine synthetase TiaS.